The following is a 30-amino-acid chain: Scolopendra 20528.11 Da toxin (30 aa).

It belongs to the CRISP family. Venom allergen 5-like subfamily. Contains 3 disulfide bonds. As to expression, expressed by the venom gland.

Its subcellular location is the secreted. This Scolopendra angulata (Barbados giant red centipede) protein is Scolopendra 20528.11 Da toxin.